Reading from the N-terminus, the 287-residue chain is Ret finger protein-like 4A-like protein 1 (287 aa).

The segment at 11-53 (CPVCLKDLEEAVQLKCGYACCLQCLNSLQKEPDGEGLLCRFCS) adopts an RING-type; degenerate zinc-finger fold. Residues 78-276 (EPKLKSVLTM…LSICSVINPS (199 aa)) form the B30.2/SPRY domain.

The sequence is that of Ret finger protein-like 4A-like protein 1 (RFPL4AL1) from Homo sapiens (Human).